The chain runs to 170 residues: MKTQRDGHSLGWWSLVLLLLGLVMPLAIIAQVLSYKEAVLRAIDGINQRSSDANLYRLLDLDPRPTMDGDPDTPKPVSFTVKETVCPRTTQQSPEDCDFKKDGLVKRCMGTVTLNQARGSFDISCDKDNKRFALLGDFFRKAKEKIGKESKRIVQRIKDFLRNLVPRTES.

An N-terminal signal peptide occupies residues 1-30 (MKTQRDGHSLGWWSLVLLLLGLVMPLAIIA). Positions 31-131 (QVLSYKEAVL…DISCDKDNKR (101 aa)) are cleaved as a propeptide — cathelin-like domain (CLD). Disulfide bonds link Cys86–Cys97 and Cys108–Cys125. The segment at 150–162 (SKRIVQRIKDFLR) is active core.

The protein belongs to the cathelicidin family. In terms of assembly, monomer, homodimer or homotrimer (in vitro). Oligomerizes as tetra- or hexamer in solution (in vitro). Post-translationally, proteolytically cleaved by proteinase PRTN3 into antibacterial peptide LL-37. Proteolytically cleaved by cathepsin CTSG and neutrophil elastase ELANE. Resistant to proteolytic degradation in solution, and when bound to both zwitterionic (mimicking mammalian membranes) and negatively charged membranes (mimicking bacterial membranes). In terms of processing, after secretion onto the skin surface, the CAMP gene product is processed by a serine protease-dependent mechanism into multiple novel antimicrobial peptides distinct from and shorter than cathelicidin LL-37. These peptides show enhanced antimicrobial action, acquiring the ability to kill skin pathogens such as S.aureus, E.coli and C.albicans. These peptides have lost the ability to stimulate CXCL8/IL8 release from keratinocytes. The peptides act synergistically, killing bacteria at lower concentrations when present together, and maintain activity at increased salt condition.

The protein resides in the secreted. Its subcellular location is the vesicle. Its function is as follows. Antimicrobial protein that is an integral component of the innate immune system. Binds to bacterial lipopolysaccharides (LPS). Acts via neutrophil N-formyl peptide receptors to enhance the release of CXCL2. Postsecretory processing generates multiple cathelicidin antimicrobial peptides with various lengths which act as a topical antimicrobial defense in sweat on skin. The unprocessed precursor form, cathelicidin antimicrobial peptide, inhibits the growth of Gram-negative E.coli and E.aerogenes with efficiencies comparable to that of the mature peptide LL-37 (in vitro). Antimicrobial peptide that is an integral component of the innate immune system. Binds to bacterial lipopolysaccharides (LPS). Causes membrane permeabilization by forming transmembrane pores (in vitro). Causes lysis of E.coli. Exhibits antimicrobial activity against Gram-negative bacteria such as P.aeruginosa, S.typhimurium, E.aerogenes, E.coli and P.syringae, Gram-positive bacteria such as L.monocytogenes, S.epidermidis, S.pyogenes and S.aureus, as well as vancomycin-resistant enterococci (in vitro). Exhibits antimicrobial activity against methicillin-resistant S.aureus, P.mirabilis, and C.albicans in low-salt media, but not in media containing 100 mM NaCl (in vitro). Forms chiral supramolecular assemblies with quinolone signal (PQS) molecules of P.aeruginosa, which may lead to interference of bacterial quorum signaling and perturbance of bacterial biofilm formation. May form supramolecular fiber-like assemblies on bacterial membranes. Induces cytokine and chemokine producation as well as TNF/TNFA and CSF2/GMCSF production in normal human keratinocytes. Exhibits hemolytic activity against red blood cells. In terms of biological role, exhibits antimicrobial activity against E.coli and B.megaterium (in vitro). This Gorilla gorilla gorilla (Western lowland gorilla) protein is Cathelicidin antimicrobial peptide.